The following is a 183-amino-acid chain: Probable chorismate pyruvate-lyase 2 (183 aa).

R76, L114, and E166 together coordinate substrate.

Belongs to the UbiC family.

It is found in the cytoplasm. The enzyme catalyses chorismate = 4-hydroxybenzoate + pyruvate. It participates in cofactor biosynthesis; ubiquinone biosynthesis. Removes the pyruvyl group from chorismate, with concomitant aromatization of the ring, to provide 4-hydroxybenzoate (4HB) for the ubiquinone pathway. The sequence is that of Probable chorismate pyruvate-lyase 2 from Pseudomonas fluorescens (strain Pf0-1).